Here is a 463-residue protein sequence, read N- to C-terminus: RuvB-like helicase 2 (463 aa).

An ATP-binding site is contributed by G76–T83.

It belongs to the RuvB family. In terms of assembly, may form heterododecamers with RVB1. Component of the SWR1 chromatin remodeling complex, the INO80 chromatin remodeling complex, and of the R2TP complex.

The protein resides in the nucleus. The enzyme catalyses ATP + H2O = ADP + phosphate + H(+). DNA helicase which participates in several chromatin remodeling complexes, including the SWR1 and the INO80 complexes. The SWR1 complex mediates the ATP-dependent exchange of histone H2A for the H2A variant HZT1 leading to transcriptional regulation of selected genes by chromatin remodeling. The INO80 complex remodels chromatin by shifting nucleosomes and is involved in DNA repair. Also involved in pre-rRNA processing. This chain is RuvB-like helicase 2 (RVB2), found in Cryptococcus neoformans var. neoformans serotype D (strain JEC21 / ATCC MYA-565) (Filobasidiella neoformans).